The following is a 258-amino-acid chain: 6-carboxyhexanoate--CoA ligase (258 aa).

This sequence belongs to the BioW family. As to quaternary structure, homodimer. The cofactor is Mg(2+).

It carries out the reaction heptanedioate + ATP + CoA = 6-carboxyhexanoyl-CoA + AMP + diphosphate. Its pathway is metabolic intermediate metabolism; pimeloyl-CoA biosynthesis; pimeloyl-CoA from pimelate: step 1/1. In terms of biological role, catalyzes the transformation of pimelate into pimeloyl-CoA with concomitant hydrolysis of ATP to AMP. This Bacillus atrophaeus (strain 1942) protein is 6-carboxyhexanoate--CoA ligase.